We begin with the raw amino-acid sequence, 120 residues long: Glycine cleavage system H protein (120 aa).

The 83-residue stretch at 19-101 (DGTVGITDHA…YEGGWLFKLE (83 aa)) folds into the Lipoyl-binding domain. Lys-60 carries the post-translational modification N6-lipoyllysine.

The protein belongs to the GcvH family. In terms of assembly, the glycine cleavage system is composed of four proteins: P, T, L and H. The cofactor is (R)-lipoate.

The glycine cleavage system catalyzes the degradation of glycine. The H protein shuttles the methylamine group of glycine from the P protein to the T protein. The sequence is that of Glycine cleavage system H protein from Deinococcus deserti (strain DSM 17065 / CIP 109153 / LMG 22923 / VCD115).